We begin with the raw amino-acid sequence, 361 residues long: Cobalt-precorrin-5B C(1)-methyltransferase (361 aa).

This sequence belongs to the CbiD family.

It catalyses the reaction Co-precorrin-5B + S-adenosyl-L-methionine = Co-precorrin-6A + S-adenosyl-L-homocysteine. It functions in the pathway cofactor biosynthesis; adenosylcobalamin biosynthesis; cob(II)yrinate a,c-diamide from sirohydrochlorin (anaerobic route): step 6/10. Functionally, catalyzes the methylation of C-1 in cobalt-precorrin-5B to form cobalt-precorrin-6A. The polypeptide is Cobalt-precorrin-5B C(1)-methyltransferase (Methylorubrum extorquens (strain CM4 / NCIMB 13688) (Methylobacterium extorquens)).